The primary structure comprises 207 residues: Holliday junction branch migration complex subunit RuvA (207 aa).

Residues 1 to 65 (MIGRIRGVIL…EDAQLLYGFN (65 aa)) form a domain I region. The domain II stretch occupies residues 66 to 143 (QKQERALFRE…KGLNGDLFEQ (78 aa)). The tract at residues 144 to 158 (NGDIELPASASSKAP) is flexible linker. The interval 159–207 (SAADIEAEASAALIALGYKPQEAAKMISRVATAGADSETLIKEALRAAI) is domain III.

The protein belongs to the RuvA family. As to quaternary structure, homotetramer. Forms an RuvA(8)-RuvB(12)-Holliday junction (HJ) complex. HJ DNA is sandwiched between 2 RuvA tetramers; dsDNA enters through RuvA and exits via RuvB. An RuvB hexamer assembles on each DNA strand where it exits the tetramer. Each RuvB hexamer is contacted by two RuvA subunits (via domain III) on 2 adjacent RuvB subunits; this complex drives branch migration. In the full resolvosome a probable DNA-RuvA(4)-RuvB(12)-RuvC(2) complex forms which resolves the HJ.

The protein localises to the cytoplasm. The RuvA-RuvB-RuvC complex processes Holliday junction (HJ) DNA during genetic recombination and DNA repair, while the RuvA-RuvB complex plays an important role in the rescue of blocked DNA replication forks via replication fork reversal (RFR). RuvA specifically binds to HJ cruciform DNA, conferring on it an open structure. The RuvB hexamer acts as an ATP-dependent pump, pulling dsDNA into and through the RuvAB complex. HJ branch migration allows RuvC to scan DNA until it finds its consensus sequence, where it cleaves and resolves the cruciform DNA. In Proteus mirabilis (strain HI4320), this protein is Holliday junction branch migration complex subunit RuvA.